The sequence spans 1137 residues: Dendrite extension defective protein 1 (1137 aa).

A signal peptide spans 1-41 (MLAHTHRINKCLYGQNQMRNRHALLGALPPIFLLLLPLISC). At 43 to 1005 (KFDPERIAAR…HAEEQSPRLA (963 aa)) the chain is on the extracellular side. In terms of domain architecture, NIDO 1 spans 163–302 (PFWNRNDLRN…GEWMFELSEL (140 aa)). 2 N-linked (GlcNAc...) asparagine glycosylation sites follow: Asn240 and Asn416. Positions 409 to 450 (DVDECKTNSTICHKNAICTNTPGRYFCMCKEGFSGDGQNDCS) constitute an EGF-like; calcium-binding domain. 3 disulfides stabilise this stretch: Cys413–Cys426, Cys420–Cys435, and Cys437–Cys449. One can recognise an NIDO 2 domain in the interval 519 to 659 (PFFGPIDLSR…GTWLYRIDKA (141 aa)). Asn571 is a glycosylation site (N-linked (GlcNAc...) asparagine). Residues 738–749 (IGNQQRQQTTKA) are compositionally biased toward polar residues. Disordered stretches follow at residues 738-765 (IGNQ…HRPI), 795-856 (FRPN…PFEA), 878-897 (QTTK…EDLS), 906-933 (TEED…TKAH), and 978-998 (NSQP…GHAE). A glycan (N-linked (GlcNAc...) asparagine) is linked at Asn756. A compositionally biased stretch (polar residues) spans 798–809 (NQRNGVQKSTQR). Residues 819 to 833 (PLKEEATTSVPREKT) are compositionally biased toward basic and acidic residues. The span at 906–915 (TEEDEEEAEI) shows a compositional bias: acidic residues. Low complexity predominate over residues 916-933 (STETTTEMSSTTTTTKAH). The segment covering 978 to 992 (NSQPPKQRNDNQPTV) has biased composition (polar residues). The chain crosses the membrane as a helical span at residues 1006–1026 (ILLPVMIILAWLVILVCIGAV). The Cytoplasmic segment spans residues 1027-1037 (VCCKRRNSRES). The interval 1106–1125 (ARLSTQERQSPPSFVNNGYT) is disordered.

In terms of processing, may be proteolytically cleaved and secreted.

The protein resides in the membrane. Its subcellular location is the cell projection. It is found in the dendrite. The protein localises to the secreted. Its function is as follows. Along with dyf-7, enables neurite growth and maintenance by anchoring amphid dendritic tips during neuron cell body migration in embryonic and larval development. Promotes seam cell remodeling during the dauer phase. Plays a role in positively regulating locomotion during the dauer phase. The protein is Dendrite extension defective protein 1 of Caenorhabditis elegans.